The sequence spans 282 residues: Homeobox protein CDX-4 (282 aa).

Disordered regions lie at residues 13 to 36 and 98 to 156; these read MYPG…GGSG and MNDM…SPYA. Residues 20 to 29 show a composition bias toward low complexity; sequence SPGGSSTAGV. Composition is skewed to polar residues over residues 110-124 and 133-148; these read DYST…SNGG and SLVS…TSPS. Residues 171 to 230 constitute a DNA-binding region (homeobox); that stretch reads KEKYRVVYTDHQRLELEKEFHCNRYITIRRKSELAVNLGLSERQVKIWFQNRRAKERKMI.

This sequence belongs to the Caudal homeobox family.

It is found in the nucleus. The polypeptide is Homeobox protein CDX-4 (Cdx4) (Mus musculus (Mouse)).